We begin with the raw amino-acid sequence, 151 residues long: Single-stranded DNA-binding protein, mitochondrial (151 aa).

A mitochondrion-targeting transit peptide spans 1 to 16 (MFRRPVLQVFRQFVRQ). Positions 30–141 (LNRVQLLGRV…IIADNIIFLS (112 aa)) constitute an SSB domain. Phosphoserine is present on residues Ser67 and Ser79. An N6-acetyllysine modification is found at Lys113. Lys122 is subject to N6-succinyllysine.

Homotetramer. Interacts with MPG/AAG, through inhibition of its glycosylase activity it potentially prevents formation of DNA breaks in ssDNA, ensuring that base removal primarily occurs in dsDNA. Interacts with POLDIP2. Interacts with PRIMPOL.

It is found in the mitochondrion. The protein resides in the mitochondrion matrix. Its subcellular location is the mitochondrion nucleoid. Its function is as follows. Binds preferentially and cooperatively to pyrimidine rich single-stranded DNA (ss-DNA). In vitro, required to maintain the copy number of mitochondrial DNA (mtDNA) and plays a crucial role during mtDNA replication by stimulating the activity of the replisome components POLG and TWNK at the replication fork. Promotes the activity of the gamma complex polymerase POLG, largely by organizing the template DNA and eliminating secondary structures to favor ss-DNA conformations that facilitate POLG activity. In addition it is able to promote the 5'-3' unwinding activity of the mtDNA helicase TWNK. May also function in mtDNA repair. The polypeptide is Single-stranded DNA-binding protein, mitochondrial (Ssbp1) (Rattus norvegicus (Rat)).